Reading from the N-terminus, the 466-residue chain is Catalase ifgD (466 aa).

The interval 1–22 (MAPNYAKKCPVMGKAPSSGHSS) is disordered. The active site involves histidine 48. Heme is bound at residue tyrosine 337.

It belongs to the catalase family. Heme is required as a cofactor.

It functions in the pathway alkaloid biosynthesis; ergot alkaloid biosynthesis. Catalase; part of the gene cluster that mediates the biosynthesis of isofumigaclavines, fungal ergot alkaloids. The tryptophan dimethylallyltransferase ifgA catalyzes the first step of ergot alkaloid biosynthesis by condensing dimethylallyl diphosphate (DMAP) and tryptophan to form 4-dimethylallyl-L-tryptophan. The second step is catalyzed by the methyltransferase ifgB that methylates 4-dimethylallyl-L-tryptophan in the presence of S-adenosyl-L-methionine, resulting in the formation of N-methyl-dimethylallyl-L-tryptophan. The catalase ifgD and the FAD-dependent oxidoreductase ifgC then transform N-methyl-dimethylallyl-L-tryptophan to chanoclavine-I which is further oxidized by ifgE in the presence of NAD(+), resulting in the formation of chanoclavine-I aldehyde. The chanoclavine-I aldehyde reductases ifgG and/or fgaOx3 reduce chanoclavine-I aldehyde to dihydrochanoclavine-I aldehyde that spontaneously dehydrates to form 6,8-dimethyl-6,7-didehydroergoline. The festuclavine dehydrogenases ifgF1 and/or ifgF2 then catalyze the reduction of 6,8-dimethyl-6,7-didehydroergoline to form festuclavine. Hydrolysis of festuclavine by a yet undetermined cytochrome P450 monooxygenase (called ifgH) then leads to the formation of isofumigaclavine B which is in turn acetylated by ifgI to isofumigaclavine A. Penicillium roqueforti has interestingly at least two sets of genes for the consumption of chanoclavine-I aldehyde on three different loci, the OYEs ifgG/fgaOx3 and the festuclavine synthase homologs ifgF1/ifgF2. The reason for the duplication of these genes is unclear, probably to ensure the conversion of chanoclavine-I aldehyde by differential gene expression under various environmental conditions. This is Catalase ifgD from Penicillium roqueforti (strain FM164).